A 344-amino-acid polypeptide reads, in one-letter code: Small ribosomal subunit protein uS3 (344 aa).

The region spanning 38-106 (LKAALRERLK…EVFIDIQEVH (69 aa)) is the KH type-2 domain. Residues 217–344 (PEPEPRREQR…QKPEGSGENQ (128 aa)) form a disordered region. Composition is skewed to basic and acidic residues over residues 219-259 (PEPR…RGDR) and 335-344 (QKPEGSGENQ).

Belongs to the universal ribosomal protein uS3 family. Part of the 30S ribosomal subunit. Forms a tight complex with proteins S10 and S14.

Its function is as follows. Binds the lower part of the 30S subunit head. Binds mRNA in the 70S ribosome, positioning it for translation. The polypeptide is Small ribosomal subunit protein uS3 (Solibacter usitatus (strain Ellin6076)).